A 336-amino-acid chain; its full sequence is GTPase Obg (336 aa).

Residues 1-159 (MKFVDEATLI…KTLKLELKLL (159 aa)) enclose the Obg domain. Residues 160–329 (ADVGLVGLPN…LIEAIFAQLR (170 aa)) form the OBG-type G domain. Residues 166–173 (GLPNAGKS), 191–195 (FTTLA), 213–216 (DIPG), 283–286 (NKMD), and 310–312 (SAI) contribute to the GTP site. Residues serine 173 and threonine 193 each coordinate Mg(2+).

Belongs to the TRAFAC class OBG-HflX-like GTPase superfamily. OBG GTPase family. As to quaternary structure, monomer. Mg(2+) is required as a cofactor.

The protein resides in the cytoplasm. Its function is as follows. An essential GTPase which binds GTP, GDP and possibly (p)ppGpp with moderate affinity, with high nucleotide exchange rates and a fairly low GTP hydrolysis rate. Plays a role in control of the cell cycle, stress response, ribosome biogenesis and in those bacteria that undergo differentiation, in morphogenesis control. The protein is GTPase Obg of Desulfatibacillum aliphaticivorans.